The primary structure comprises 137 residues: ATP synthase epsilon chain (137 aa).

It belongs to the ATPase epsilon chain family. In terms of assembly, F-type ATPases have 2 components, CF(1) - the catalytic core - and CF(0) - the membrane proton channel. CF(1) has five subunits: alpha(3), beta(3), gamma(1), delta(1), epsilon(1). CF(0) has three main subunits: a, b and c.

It is found in the cell inner membrane. Produces ATP from ADP in the presence of a proton gradient across the membrane. The chain is ATP synthase epsilon chain from Ruegeria sp. (strain TM1040) (Silicibacter sp.).